We begin with the raw amino-acid sequence, 335 residues long: Holliday junction branch migration complex subunit RuvB (335 aa).

Positions 1-183 (MDERIISSET…FGVIDHLEFY (183 aa)) are large ATPase domain (RuvB-L). ATP contacts are provided by residues Leu-22, Arg-23, Gly-64, Lys-67, Thr-68, Thr-69, 130–132 (EDY), Arg-173, Tyr-183, and Arg-220. Thr-68 serves as a coordination point for Mg(2+). The small ATPAse domain (RuvB-S) stretch occupies residues 184–254 (TEEQLTEIVL…LAKEALTLLQ (71 aa)). Residues 257–335 (PRGLDTIDQK…HLGISYEKEV (79 aa)) form a head domain (RuvB-H) region. DNA is bound by residues Arg-293, Arg-312, and Arg-317.

This sequence belongs to the RuvB family. As to quaternary structure, homohexamer. Forms an RuvA(8)-RuvB(12)-Holliday junction (HJ) complex. HJ DNA is sandwiched between 2 RuvA tetramers; dsDNA enters through RuvA and exits via RuvB. An RuvB hexamer assembles on each DNA strand where it exits the tetramer. Each RuvB hexamer is contacted by two RuvA subunits (via domain III) on 2 adjacent RuvB subunits; this complex drives branch migration. In the full resolvosome a probable DNA-RuvA(4)-RuvB(12)-RuvC(2) complex forms which resolves the HJ.

The protein resides in the cytoplasm. It catalyses the reaction ATP + H2O = ADP + phosphate + H(+). In terms of biological role, the RuvA-RuvB-RuvC complex processes Holliday junction (HJ) DNA during genetic recombination and DNA repair, while the RuvA-RuvB complex plays an important role in the rescue of blocked DNA replication forks via replication fork reversal (RFR). RuvA specifically binds to HJ cruciform DNA, conferring on it an open structure. The RuvB hexamer acts as an ATP-dependent pump, pulling dsDNA into and through the RuvAB complex. RuvB forms 2 homohexamers on either side of HJ DNA bound by 1 or 2 RuvA tetramers; 4 subunits per hexamer contact DNA at a time. Coordinated motions by a converter formed by DNA-disengaged RuvB subunits stimulates ATP hydrolysis and nucleotide exchange. Immobilization of the converter enables RuvB to convert the ATP-contained energy into a lever motion, pulling 2 nucleotides of DNA out of the RuvA tetramer per ATP hydrolyzed, thus driving DNA branch migration. The RuvB motors rotate together with the DNA substrate, which together with the progressing nucleotide cycle form the mechanistic basis for DNA recombination by continuous HJ branch migration. Branch migration allows RuvC to scan DNA until it finds its consensus sequence, where it cleaves and resolves cruciform DNA. In Listeria monocytogenes serotype 4a (strain HCC23), this protein is Holliday junction branch migration complex subunit RuvB.